A 135-amino-acid polypeptide reads, in one-letter code: Large-conductance mechanosensitive channel (135 aa).

A run of 2 helical transmembrane segments spans residues A9–F29 and I79–I99.

It belongs to the MscL family. Homopentamer.

Its subcellular location is the cell inner membrane. Functionally, channel that opens in response to stretch forces in the membrane lipid bilayer. May participate in the regulation of osmotic pressure changes within the cell. The sequence is that of Large-conductance mechanosensitive channel from Aeromonas salmonicida (strain A449).